A 411-amino-acid polypeptide reads, in one-letter code: Peptidase T (411 aa).

H79 provides a ligand contact to Zn(2+). Residue D81 is part of the active site. D142 contacts Zn(2+). Residue E176 is the Proton acceptor of the active site. Residues E177, D199, and H381 each contribute to the Zn(2+) site.

This sequence belongs to the peptidase M20B family. It depends on Zn(2+) as a cofactor.

It localises to the cytoplasm. It carries out the reaction Release of the N-terminal residue from a tripeptide.. In terms of biological role, cleaves the N-terminal amino acid of tripeptides. The sequence is that of Peptidase T from Geobacillus kaustophilus (strain HTA426).